Reading from the N-terminus, the 859-residue chain is MRRGPQVALVLGLLCIYLAQANFAPHFFDNGVGSTNGNMALFSLPEDTPVGSHVYTLNGTDPEGDPISYHISFDPSTRSVFSVDPNFGNITLVEELDREREDEIEAIISISDGLNLVAEKVVIVVTDANDEAPRFLQEPYNILVPENTPAGSSIFKVQAEDKDTGSGGSVTYFLQSLHSSKFTVDRHSGVLRLQAGATLDYEKSRAHFITVVAKDGGGRLRGADVVFSATTTVTINVEDVQDTAPIFVGTPYYGYVYEDTLPGSEVLTVVAIDGDRGKPNHILYRLLNESDGLFEINETSGAISVLQSPAQLRREVYELHVQVTEVNSSGSPAAQSTVPVIIRIVDLNNHPPTFYGESGPQNKFELSMFEHPPQGEILRGLKITVNDSDQGANAKFNLRLVGPGGIFRVVPQTVLNEAQVTIIVENSAAIDFEKSKSLTFKLLAIEVNTPEKFSSTADIVIQLLDTNDNVPKFTSHYYIARIPENVPGGSNVVAVTAVDPDTGPWGKVQYSIYGTGSDLFLIHPSTGLIYTQPWASLDAEGTSRYNFYVKAEDMDGRYSLAEVFVTLLDVNDHYPQFVQSVQEKTMVLGTPLKIEATDQDAEEPNNLVDYSITRAEPVNVFDIDAHTGEIRLKNSIRSLEALHNITPSGEYSWSLQVQAKDRGSPSFSTTALLKIDITDTERLSRSSMAAFLIQTKDNPMKAVGVLAGVMAIVVAITVLISTATFWRNKKSNKVLPVRRVLRRRPSPAPHTVRIEWLKFRRAKAASKFILKEDPPNENCNNSRVGVTVPPRAPALPPPPKMASSTVAQQTVPTVSGSLTPQPSQQLPTPKPLGGPAQSSLVSELKQKFEKKSLGNKAYV.

Positions 1 to 21 are cleaved as a signal peptide; it reads MRRGPQVALVLGLLCIYLAQA. At 22-701 the chain is on the extracellular side; the sequence is NFAPHFFDNG…LIQTKDNPMK (680 aa). Cadherin domains lie at 36–135, 136–247, 248–354, 360–473, 474–577, and 569–691; these read NGNM…APRF, LQEP…APIF, VGTP…PPTF, PQNK…VPKF, TSHY…YPQF, and DVND…MAAF. N-linked (GlcNAc...) asparagine glycans are attached at residues Asn-58 and Asn-89. Asn-288 and Asn-297 each carry an N-linked (GlcNAc...) asparagine glycan. A helical membrane pass occupies residues 702 to 722; that stretch reads AVGVLAGVMAIVVAITVLIST. The Cytoplasmic segment spans residues 723–859; it reads ATFWRNKKSN…KKSLGNKAYV (137 aa). A disordered region spans residues 789-859; the sequence is PPRAPALPPP…KKSLGNKAYV (71 aa). Residues 790–800 show a composition bias toward pro residues; sequence PRAPALPPPPK. Over residues 802-816 the composition is skewed to polar residues; that stretch reads ASSTVAQQTVPTVSG. Over residues 817–827 the composition is skewed to low complexity; the sequence is SLTPQPSQQLP.

In terms of assembly, interacts with PROM1. In terms of processing, undergoes proteolytic cleavage; produces a soluble 95 kDa N-terminal fragment and a 25 kDa cell-associated C-terminal fragment. Expressed in the retina. Strongly expressed by the mitral and tufted cells in the main and accessory olfactory bulbs. Also expressed in the septum and olfactory cortex. Weakly expressed in the triangular septal nucleus and piriform cortex.

It localises to the cell membrane. In terms of biological role, potential calcium-dependent cell-adhesion protein. May be required for the structural integrity of the outer segment (OS) of photoreceptor cells. The chain is Cadherin-related family member 1 (Cdhr1) from Rattus norvegicus (Rat).